The chain runs to 125 residues: MKRLLSWLTGLVVMAGLLFSLATPSGVQAADIRNVADDKIAERGDKVDLNNSSVRRFQQFPGMYPTLAGKIVLGGPYESVDDVLALDLTDRQKELFEKYRDNFTVTAPSIALNEGFDRINDGQYR.

The signal sequence occupies residues 1–29 (MKRLLSWLTGLVVMAGLLFSLATPSGVQA).

The protein belongs to the PsbU family. As to quaternary structure, PSII is composed of 1 copy each of membrane proteins PsbA, PsbB, PsbC, PsbD, PsbE, PsbF, PsbH, PsbI, PsbJ, PsbK, PsbL, PsbM, PsbT, PsbX, PsbY, PsbZ, Psb30/Ycf12, peripheral proteins PsbO, CyanoQ (PsbQ), PsbU, PsbV and a large number of cofactors. It forms dimeric complexes.

Its subcellular location is the cellular thylakoid membrane. One of the extrinsic, lumenal subunits of photosystem II (PSII). PSII is a light-driven water plastoquinone oxidoreductase, using light energy to abstract electrons from H(2)O, generating a proton gradient subsequently used for ATP formation. The extrinsic proteins stabilize the structure of photosystem II oxygen-evolving complex (OEC), the ion environment of oxygen evolution and protect the OEC against heat-induced inactivation. The sequence is that of Photosystem II extrinsic protein U from Synechococcus sp. (strain WH7803).